A 754-amino-acid polypeptide reads, in one-letter code: 5-methyltetrahydropteroyltriglutamate--homocysteine methyltransferase (754 aa).

5-methyltetrahydropteroyltri-L-glutamate is bound by residues 17–20 and K117; that span reads RELK. L-homocysteine-binding positions include 431 to 433 and E484; that span reads IGS. L-methionine contacts are provided by residues 431-433 and E484; that span reads IGS. Residues 515-516 and W561 each bind 5-methyltetrahydropteroyltri-L-glutamate; that span reads RC. D599 is an L-homocysteine binding site. Residue D599 participates in L-methionine binding. 5-methyltetrahydropteroyltri-L-glutamate is bound at residue E605. H641, C643, and E665 together coordinate Zn(2+). Residue H694 is the Proton donor of the active site. Residue C726 coordinates Zn(2+).

The protein belongs to the vitamin-B12 independent methionine synthase family. It depends on Zn(2+) as a cofactor.

It catalyses the reaction 5-methyltetrahydropteroyltri-L-glutamate + L-homocysteine = tetrahydropteroyltri-L-glutamate + L-methionine. It participates in amino-acid biosynthesis; L-methionine biosynthesis via de novo pathway; L-methionine from L-homocysteine (MetE route): step 1/1. Its function is as follows. Catalyzes the transfer of a methyl group from 5-methyltetrahydrofolate to homocysteine resulting in methionine formation. The protein is 5-methyltetrahydropteroyltriglutamate--homocysteine methyltransferase of Salmonella choleraesuis (strain SC-B67).